We begin with the raw amino-acid sequence, 286 residues long: Phosducin-like protein 2 (286 aa).

Phosphoserine occurs at positions 35 and 62. The thioredoxin fold stretch occupies residues 96–286 (FGEVFHINKP…INDDDDGFFD (191 aa)).

Belongs to the phosducin family. As to quaternary structure, interacts with the G protein beta-gamma subunit complex (STE4-STE18 complex). Interacts with CCT2; this interaction leads to inhibition of CCT complex mediated actin folding.

Its subcellular location is the cytoplasm. Its function is as follows. Essential for cell growth. Inhibits early G-protein signaling events following pheromone stimulation. Inhibits the folding activity of the chaperonin-containing T-complex (CCT) CCT2 which leads to inhibition of cytoskeletal actin folding. Plays a role in cell cycle progression in G1/S phase. The polypeptide is Phosducin-like protein 2 (Saccharomyces cerevisiae (strain ATCC 204508 / S288c) (Baker's yeast)).